A 571-amino-acid polypeptide reads, in one-letter code: Proline--tRNA ligase (571 aa).

Belongs to the class-II aminoacyl-tRNA synthetase family. ProS type 1 subfamily. As to quaternary structure, homodimer.

The protein resides in the cytoplasm. The enzyme catalyses tRNA(Pro) + L-proline + ATP = L-prolyl-tRNA(Pro) + AMP + diphosphate. Its function is as follows. Catalyzes the attachment of proline to tRNA(Pro) in a two-step reaction: proline is first activated by ATP to form Pro-AMP and then transferred to the acceptor end of tRNA(Pro). As ProRS can inadvertently accommodate and process non-cognate amino acids such as alanine and cysteine, to avoid such errors it has two additional distinct editing activities against alanine. One activity is designated as 'pretransfer' editing and involves the tRNA(Pro)-independent hydrolysis of activated Ala-AMP. The other activity is designated 'posttransfer' editing and involves deacylation of mischarged Ala-tRNA(Pro). The misacylated Cys-tRNA(Pro) is not edited by ProRS. The chain is Proline--tRNA ligase from Pediococcus pentosaceus (strain ATCC 25745 / CCUG 21536 / LMG 10740 / 183-1w).